Consider the following 57-residue polypeptide: Large ribosomal subunit protein bL32 (57 aa).

The disordered stretch occupies residues 1–22; sequence MAVPKKKTSKSKRDKRRATWRH.

This sequence belongs to the bacterial ribosomal protein bL32 family.

This is Large ribosomal subunit protein bL32 from Nostoc punctiforme (strain ATCC 29133 / PCC 73102).